A 237-amino-acid polypeptide reads, in one-letter code: Phosphoribosylaminoimidazole-succinocarboxamide synthase (237 aa).

Belongs to the SAICAR synthetase family.

It catalyses the reaction 5-amino-1-(5-phospho-D-ribosyl)imidazole-4-carboxylate + L-aspartate + ATP = (2S)-2-[5-amino-1-(5-phospho-beta-D-ribosyl)imidazole-4-carboxamido]succinate + ADP + phosphate + 2 H(+). It functions in the pathway purine metabolism; IMP biosynthesis via de novo pathway; 5-amino-1-(5-phospho-D-ribosyl)imidazole-4-carboxamide from 5-amino-1-(5-phospho-D-ribosyl)imidazole-4-carboxylate: step 1/2. This chain is Phosphoribosylaminoimidazole-succinocarboxamide synthase, found in Edwardsiella ictaluri (strain 93-146).